Consider the following 2126-residue polypeptide: Serine/threonine-protein kinase WNK1 (2126 aa).

Disordered regions lie at residues 1 to 80 and 93 to 202; these read MSDG…FFRR and LPGL…QQQD. The residue at position 17 (Ser17) is a Phosphoserine. The segment covering 48-64 has biased composition (basic and acidic residues); that stretch reads RTEEYRRRRHTMDKDSR. Phosphothreonine is present on Thr58. Low complexity-rich tracts occupy residues 101–111 and 127–141; these read PQPSVPAVVPQ and VASQ…AASP. A phosphoserine mark is found at Ser165 and Ser172. One can recognise a Protein kinase domain in the interval 221–479; the sequence is LKFDIEIGRG…IKDLLNHAFF (259 aa). Ser231 lines the ATP pocket. Chloride contacts are provided by Phe283 and Leu299. ATP contacts are provided by residues 301 to 304 and Lys351; that span reads TELM. The active-site Proton acceptor is the Asp368. Chloride contacts are provided by Leu369 and Leu371. A phosphoserine; by autocatalysis mark is found at Ser378 and Ser382. Residues 488 to 555 are autoinhibitory domain; that stretch reads ELAEEDDGEK…VCEGDHKTMA (68 aa). The span at 573–588 shows a compositional bias: basic and acidic residues; that stretch reads QLVREEQEKRKQEESS. The interval 573–865 is disordered; sequence QLVREEQEKR…SRHEKTSRPK (293 aa). Residues 593 to 614 show a composition bias toward polar residues; sequence NEQQASVSQAGIQPLSVASTGI. Residues 615-626 are compositionally biased toward low complexity; it reads PTAPTTSASVST. Residues 629 to 639 are interaction with KLHL3; the sequence is EPEEPEADQHQ. 3 stretches are compositionally biased toward polar residues: residues 638–682, 695–705, and 713–733; these read HQQL…GSQH, TVSSIQAQSQP, and SMAQ…VLSS. A compositionally biased stretch (low complexity) spans 734-746; sequence QPVQHPQQQGIQP. Positions 750 to 789 are enriched in polar residues; the sequence is PQQAVQYSLPQAASSSEGTVQPVSQPQVSAGTQSSTQGVS. Low complexity predominate over residues 793–823; the sequence is PPEQTPITQSQPTQPVPLVSSVDSAHSDVAS. Polar residues predominate over residues 826–836; sequence SDGNENAPSSS. A compositionally biased stretch (basic residues) spans 844–865; that stretch reads TKRHYRKSVRSRSRHEKTSRPK. The short motif at 1003–1006 is the RFXV motif 1 element; sequence RFIV. At Ser1007 the chain carries Phosphoserine. 2 disordered regions span residues 1474–1507 and 1557–1595; these read GQVS…LTKT and IPVT…ASSS. Residues 1477-1496 are compositionally biased toward low complexity; sequence STPGTHASAPASTATGAKPG. Residues 1567 to 1583 show a composition bias toward polar residues; the sequence is STMSSTAVTEAGSQPQK. The RFXV motif 2 signature appears at 1604 to 1607; it reads RFQV. Residues 1610–1695 form a disordered region; it reads TMDDAQKERK…TKVGRFQVTT (86 aa). The segment covering 1613 to 1629 has biased composition (basic and acidic residues); it reads DAQKERKNRSEDTKSVH. A compositionally biased stretch (low complexity) spans 1632–1650; the sequence is SSTSESSVLSSSSPESTLV. Short sequence motifs (RFXV motif) lie at residues 1690 to 1693 and 1702 to 1705; these read RFQV and RFSV. The span at 1709–1719 shows a compositional bias: basic and acidic residues; it reads EDKVTELKKEG. 3 disordered regions span residues 1709–1783, 1856–1940, and 1952–1990; these read EDKV…LCSK, VIIP…NLYS, and SLSA…KGTF. The residue at position 1723 (Ser1723) is a Phosphoserine. Basic and acidic residues predominate over residues 1738–1747; that stretch reads PKKEKPELAE. Phosphoserine is present on residues Ser1755, Ser1756, Ser1771, Ser1773, Ser1776, and Ser1865. Residues 1866-1878 show a composition bias toward basic residues; that stretch reads GRRRRPTKSKGSK. Residues 1879 to 1889 show a composition bias toward low complexity; sequence SSRSSSLGNKS. Polar residues predominate over residues 1890 to 1940; the sequence is PQLSGNLSGQSGTSVLNPQQTLHPPGNTPETGHNQLLQPLKPSPSSDNLYS. Over residues 1957–1981 the composition is skewed to low complexity; it reads GQGTSSTNTVGGTVSSQAAQAQPPA. An amphipathic alpha-helix region spans residues 1985–2005; sequence SRKGTFTDDLHKLVDNWARDA. 2 positions are modified to phosphoserine: Ser2014 and Ser2030. A disordered region spans residues 2076 to 2097; sequence PFGTQWSGTGGPAPQPLGQFQP. Phosphoserine is present on residues Ser2114 and Ser2116.

Belongs to the protein kinase superfamily. Ser/Thr protein kinase family. WNK subfamily. Interacts with WNK3. Interacts with WNK4; inhibiting the activity of WNK4. Interacts with SGK1; promoting its activation. Associates with the mTORC2 complex. Interacts with UVRAG. Interacts (via amphipathic alpha-helix region) with EMC2; promoting the ER membrane protein complex assembly. As to quaternary structure, interacts with isoform 1; inhibiting isoform 1 activity. Mg(2+) serves as cofactor. In terms of processing, autophosphorylated at Ser-378 and Ser-382, promoting its activity. Autophosphorylation at Ser-382 is inhibited by intracellular calcium. Phosphorylation at Thr-58 increases ability to activate SGK1. Post-translationally, ubiquitinated by the BCR(KLHL3) complex, leading to its degradation. Also ubiquitinated by the BCR(KLHL2) complex. May be O-glycosylated.

Its subcellular location is the cytoplasm. The protein resides in the nucleus. It is found in the cytoskeleton. It localises to the spindle. The catalysed reaction is L-seryl-[protein] + ATP = O-phospho-L-seryl-[protein] + ADP + H(+). It carries out the reaction L-threonyl-[protein] + ATP = O-phospho-L-threonyl-[protein] + ADP + H(+). Activated in response to hyperosmotic stress: cell shrinkage promotes formation of a membraneless compartment that concentrates WNK1 with its substrates, OXSR1/OSR1 and STK39/SPAK. Activation requires autophosphorylation of Ser-382 and, to a lower extent, Ser-378. Autophosphorylation and subsequent activation is inhibited by increases in intracellular ionic strength: Cl(-) potently inhibits WNK1 kinase activity via direct binding. Also inhibited by K(+) ions. Inhibited by Compound 12 ((5-Chloro-2-(2-((methyl-d3)amino)thiazol-4-yl)- pyridin-4-yl)(4-(4-chlorobenzyl)piperazin-1-yl)methanone). Serine/threonine-protein kinase component of the WNK1-SPAK/OSR1 kinase cascade, which acts as a key regulator of blood pressure and regulatory volume increase by promoting ion influx. WNK1 mediates regulatory volume increase in response to hyperosmotic stress by acting as a molecular crowding sensor, which senses cell shrinkage and mediates formation of a membraneless compartment by undergoing liquid-liquid phase separation. The membraneless compartment concentrates WNK1 with its substrates, OXSR1/OSR1 and STK39/SPAK, promoting WNK1-dependent phosphorylation and activation of downstream kinases OXSR1/OSR1 and STK39/SPAK. Following activation, OXSR1/OSR1 and STK39/SPAK catalyze phosphorylation of ion cotransporters SLC12A1/NKCC2, SLC12A2/NKCC1, SLC12A5/KCC2 and SLC12A6/KCC3, regulating their activity. Phosphorylation of Na-K-Cl cotransporters SLC12A2/NKCC1 and SLC12A2/NKCC1 promote their activation and ion influx; simultaneously, phosphorylation of K-Cl cotransporters SLC12A5/KCC2 and SLC12A6/KCC3 inhibit their activity, blocking ion efflux. Also acts as a regulator of angiogenesis in endothelial cells. Also acts independently of the WNK1-SPAK/OSR1 kinase cascade by catalyzing phosphorylation of other substrates, such as SYT2, PCF11 and NEDD4L. Mediates phosphorylation of SYT2, regulating SYT2 association with phospholipids and membrane-binding. Regulates mRNA export in the nucleus by mediating phosphorylation of PCF11, thereby decreasing the association between PCF11 and POLR2A/RNA polymerase II and promoting mRNA export to the cytoplasm. Acts as a negative regulator of autophagy. Required for the abscission step during mitosis, independently of the WNK1-SPAK/OSR1 kinase cascade. WNK1 may also play a role in actin cytoskeletal reorganization. Also acts as a scaffold protein independently of its protein kinase activity: negatively regulates cell membrane localization of various transporters and channels, such as SLC4A4, SLC26A6, SLC26A9, TRPV4 and CFTR. Involved in the regulation of epithelial Na(+) channel (ENaC) by promoting activation of SGK1 in a kinase-independent manner. Probably activates SGK1 by acting as a scaffold protein that promotes the recruitment of SGK1 to the mTORC2 complex in response to chloride, leading to mTORC2-dependent phosphorylation and activation of SGK1. Acts as an assembly factor for the ER membrane protein complex independently of its protein kinase activity: associates with EMC2 in the cytoplasm via its amphipathic alpha-helix, and prevents EMC2 ubiquitination and subsequent degradation, thereby promoting EMC2 stabilization. Its function is as follows. Kinase-defective isoform specifically expressed in kidney, which acts as a dominant-negative regulator of the longer isoform 1. Does not directly inhibit WNK4 and has no direct effect on sodium and chloride ion transport. Down-regulates sodium-chloride cotransporter activity indirectly by inhibiting isoform 1, it associates with isoform 1 and attenuates its kinase activity. In kidney, may play an important role regulating sodium and potassium balance. Functionally, kinase-defective isoform produced by alternative promoter usage and alternative splicing. In Rattus norvegicus (Rat), this protein is Serine/threonine-protein kinase WNK1.